A 220-amino-acid chain; its full sequence is CASP-like protein 4B1 (220 aa).

Residues 1-74 are Cytoplasmic-facing; that stretch reads MAMVTTEAAA…RWRREDMLDK (74 aa). The segment at 13-56 is disordered; that stretch reads TTAATAAAEKPQDVEKPDYAPYNGASTTADGGTGARARRGDGGG. The helical transmembrane segment at 75 to 95 threads the bilayer; it reads SPLALHAAAAIFAFVALVLVA. The Extracellular segment spans residues 96–109; that stretch reads SNQHGDWMQFDRYQ. Residues 110-127 form a helical membrane-spanning segment; it reads EYRYLLAIASLALLYSLA. Residues 128–152 lie on the Cytoplasmic side of the membrane; the sequence is QAARHAHRMRGGVDPVSSASARLLD. The chain crosses the membrane as a helical span at residues 153–173; that stretch reads FVGDQVVAYLLMSALSAAVPI. Over 174-188 the chain is Extracellular; that stretch reads TNRMRSAVVNNFTDA. Asn-184 carries N-linked (GlcNAc...) asparagine glycosylation. The helical transmembrane segment at 189 to 209 threads the bilayer; sequence TAAAISMAFFSFVALALSAVV. Topologically, residues 210-220 are cytoplasmic; sequence SGYKLSKQTYM.

Belongs to the Casparian strip membrane proteins (CASP) family. As to quaternary structure, homodimer and heterodimers.

The protein resides in the cell membrane. The polypeptide is CASP-like protein 4B1 (Sorghum bicolor (Sorghum)).